A 522-amino-acid polypeptide reads, in one-letter code: Glucans biosynthesis protein G (522 aa).

Positions 1 to 33 (MLDNKFGFKQRVASLRWLSAAIMLSVSAVPAWA) are cleaved as a signal peptide.

This sequence belongs to the OpgD/OpgG family.

It is found in the periplasm. The protein operates within glycan metabolism; osmoregulated periplasmic glucan (OPG) biosynthesis. In terms of biological role, involved in the biosynthesis of osmoregulated periplasmic glucans (OPGs). The polypeptide is Glucans biosynthesis protein G (Pectobacterium carotovorum subsp. carotovorum (strain PC1)).